Reading from the N-terminus, the 570-residue chain is Sulfite reductase [NADPH] hemoprotein beta-component (570 aa).

[4Fe-4S] cluster is bound by residues Cys434, Cys440, Cys479, and Cys483. A siroheme-binding site is contributed by Cys483.

Belongs to the nitrite and sulfite reductase 4Fe-4S domain family. As to quaternary structure, alpha(8)-beta(8). The alpha component is a flavoprotein, the beta component is a hemoprotein. It depends on siroheme as a cofactor. The cofactor is [4Fe-4S] cluster.

The enzyme catalyses hydrogen sulfide + 3 NADP(+) + 3 H2O = sulfite + 3 NADPH + 4 H(+). Its pathway is sulfur metabolism; hydrogen sulfide biosynthesis; hydrogen sulfide from sulfite (NADPH route): step 1/1. In terms of biological role, component of the sulfite reductase complex that catalyzes the 6-electron reduction of sulfite to sulfide. This is one of several activities required for the biosynthesis of L-cysteine from sulfate. The protein is Sulfite reductase [NADPH] hemoprotein beta-component of Enterobacter sp. (strain 638).